The primary structure comprises 181 residues: Large ribosomal subunit protein uL10 (181 aa).

This sequence belongs to the universal ribosomal protein uL10 family. In terms of assembly, part of the ribosomal stalk of the 50S ribosomal subunit. The N-terminus interacts with L11 and the large rRNA to form the base of the stalk. The C-terminus forms an elongated spine to which L12 dimers bind in a sequential fashion forming a multimeric L10(L12)X complex.

Functionally, forms part of the ribosomal stalk, playing a central role in the interaction of the ribosome with GTP-bound translation factors. This chain is Large ribosomal subunit protein uL10, found in Bradyrhizobium diazoefficiens (strain JCM 10833 / BCRC 13528 / IAM 13628 / NBRC 14792 / USDA 110).